Reading from the N-terminus, the 281-residue chain is MILTKAQYEEIAQCLVSVPPTRQSLRKLKQRFPSQSQATLLSIFSQEYQKHIKRTHAKHHTPEAIESYYQRYLNGVGKNGAAPVLLELANEVDYAPSLMARIILERFLQGHEQTPPSKSVINSMLRDPSQIPDGVLANQVYQCIVNDCCYGPLVDCIKHAIGYEHEVLLRDLLLKKNLSFLDEDQLRAKGYDKTPDFILQVPVAVEGHIIHWIESKASFGDECSHHAYLHGQFWSYWNRFGPGLVIYWYGFIQELDCNRERGILLKASFPTDIVTLCHSTA.

T114 is subject to Phosphothreonine.

It is found in the nucleus. It localises to the cytoplasm. Plays a role in erythroid cell differentiation. The protein is CDAN1-interacting nuclease 1 of Mus musculus (Mouse).